We begin with the raw amino-acid sequence, 1604 residues long: E3 ubiquitin-protein ligase HECW1 (1604 aa).

Positions S182–V318 constitute a C2 domain. Disordered regions lie at residues D350–P539, P572–V604, G642–A667, and S727–E826. Residues S362 to E380 are compositionally biased toward polar residues. The segment covering E387–S396 has biased composition (basic and acidic residues). The segment covering S398 to E412 has biased composition (polar residues). 2 stretches are compositionally biased toward acidic residues: residues A435 to D444 and E458 to S469. The span at G494 to D505 shows a compositional bias: basic and acidic residues. The segment covering T580–E589 has biased composition (acidic residues). Residues S590 to L601 show a composition bias toward basic and acidic residues. Polar residues-rich tracts occupy residues S654–A667, D748–G762, and H803–P812. Positions E826–M859 constitute a WW 1 domain. S871 carries the phosphoserine modification. The stretch at S871–S898 forms a coiled coil. A disordered region spans residues A890–L936. Residues D908–S917 show a composition bias toward gly residues. Phosphoserine is present on residues S935 and S937. A WW 2 domain is found at L1016–I1049. The region spanning S1269 to E1604 is the HECT domain. Residue C1572 is the Glycyl thioester intermediate of the active site.

In terms of assembly, interacts with DVL1 and SSR3. In terms of tissue distribution, predominantly expressed in neurons of the spinal cord.

It is found in the cytoplasm. The enzyme catalyses S-ubiquitinyl-[E2 ubiquitin-conjugating enzyme]-L-cysteine + [acceptor protein]-L-lysine = [E2 ubiquitin-conjugating enzyme]-L-cysteine + N(6)-ubiquitinyl-[acceptor protein]-L-lysine.. Its pathway is protein modification; protein ubiquitination. E3 ubiquitin-protein ligase that mediates ubiquitination and subsequent degradation of DVL1. The chain is E3 ubiquitin-protein ligase HECW1 (Hecw1) from Mus musculus (Mouse).